Here is a 461-residue protein sequence, read N- to C-terminus: Bifunctional protein GlmU (461 aa).

The tract at residues 1 to 234 is pyrophosphorylase; that stretch reads MSLSVVILAA…EIEVEGANNR (234 aa). Residues 8 to 11, Lys22, Gln77, 82 to 83, 104 to 106, Gly141, Glu159, Asn174, and Asn232 each bind UDP-N-acetyl-alpha-D-glucosamine; these read LAAG, GT, and YGD. Asp106 contacts Mg(2+). A Mg(2+)-binding site is contributed by Asn232. Positions 235-255 are linker; that stretch reads VQLATLERAYQARIAEELMIA. The segment at 256-461 is N-acetyltransferase; sequence GASLRDPARI…AGWQRPVKKS (206 aa). 2 residues coordinate UDP-N-acetyl-alpha-D-glucosamine: Arg338 and Lys356. His368 (proton acceptor) is an active-site residue. UDP-N-acetyl-alpha-D-glucosamine-binding residues include Tyr371 and Asn382. Acetyl-CoA is bound by residues Ala385, 391–392, Ser410, Ala428, and Arg445; that span reads NY.

It in the N-terminal section; belongs to the N-acetylglucosamine-1-phosphate uridyltransferase family. The protein in the C-terminal section; belongs to the transferase hexapeptide repeat family. Homotrimer. Mg(2+) is required as a cofactor.

Its subcellular location is the cytoplasm. It catalyses the reaction alpha-D-glucosamine 1-phosphate + acetyl-CoA = N-acetyl-alpha-D-glucosamine 1-phosphate + CoA + H(+). It carries out the reaction N-acetyl-alpha-D-glucosamine 1-phosphate + UTP + H(+) = UDP-N-acetyl-alpha-D-glucosamine + diphosphate. Its pathway is nucleotide-sugar biosynthesis; UDP-N-acetyl-alpha-D-glucosamine biosynthesis; N-acetyl-alpha-D-glucosamine 1-phosphate from alpha-D-glucosamine 6-phosphate (route II): step 2/2. The protein operates within nucleotide-sugar biosynthesis; UDP-N-acetyl-alpha-D-glucosamine biosynthesis; UDP-N-acetyl-alpha-D-glucosamine from N-acetyl-alpha-D-glucosamine 1-phosphate: step 1/1. It functions in the pathway bacterial outer membrane biogenesis; LPS lipid A biosynthesis. Its function is as follows. Catalyzes the last two sequential reactions in the de novo biosynthetic pathway for UDP-N-acetylglucosamine (UDP-GlcNAc). The C-terminal domain catalyzes the transfer of acetyl group from acetyl coenzyme A to glucosamine-1-phosphate (GlcN-1-P) to produce N-acetylglucosamine-1-phosphate (GlcNAc-1-P), which is converted into UDP-GlcNAc by the transfer of uridine 5-monophosphate (from uridine 5-triphosphate), a reaction catalyzed by the N-terminal domain. The protein is Bifunctional protein GlmU of Colwellia psychrerythraea (strain 34H / ATCC BAA-681) (Vibrio psychroerythus).